The chain runs to 149 residues: Glycophorin-A (149 aa).

Positions M1–A19 are cleaved as a signal peptide. The Extracellular portion of the chain corresponds to S20–E90. S21 carries O-linked (GalNAc...) serine glycosylation. 3 O-linked (GalNAc...) threonine glycosylation sites follow: T22, T23, and T29. Residue S30 is glycosylated (O-linked (GalNAc...) serine). Residue T31 is glycosylated (O-linked (GalNAc...) threonine). S32 carries an O-linked (GalNAc...) serine glycan. O-linked (GalNAc...) threonine glycosylation occurs at T35. 2 O-linked (GalNAc...) serine glycosylation sites follow: S37 and S40. O-linked (GalNAc...) threonine glycosylation is present at T43. Residue S44 is glycosylated (O-linked (GalNAc...) serine). O-linked (GalNAc...) threonine glycans are attached at residues T51 and T55. S62 carries O-linked (GalNAc...) serine glycosylation. T68 carries O-linked (GalNAc...) threonine glycosylation. A helical membrane pass occupies residues I91–I113. The Cytoplasmic segment spans residues R114 to Q149. Positions S122–Q149 are disordered. Residues S137 and S147 each carry the phosphoserine modification.

This sequence belongs to the glycophorin-A family. In terms of assembly, homodimer. Component of the ankyrin-1 complex in the erythrocyte, composed of ANK1, RHCE, RHAG, SLC4A1, EPB42, GYPA, GYPB and AQP1. Interacts with SLC4A1; a GYPA monomer is bound at each end of the SLC4A1 dimer forming a heterotetramer.

It localises to the cell membrane. Functionally, component of the ankyrin-1 complex, a multiprotein complex involved in the stability and shape of the erythrocyte membrane. Glycophorin A is the major intrinsic membrane protein of the erythrocyte. The N-terminal glycosylated segment, which lies outside the erythrocyte membrane, has MN blood group receptors. Appears to be important for the function of SLC4A1 and is required for high activity of SLC4A1. May be involved in translocation of SLC4A1 to the plasma membrane. This is Glycophorin-A from Pan troglodytes (Chimpanzee).